Consider the following 304-residue polypeptide: Agmatinase (304 aa).

Mn(2+) is bound by residues His-126, Asp-149, His-151, Asp-153, Asp-230, and Asp-232.

Belongs to the arginase family. Agmatinase subfamily. Mn(2+) is required as a cofactor.

It catalyses the reaction agmatine + H2O = urea + putrescine. It functions in the pathway amine and polyamine biosynthesis; putrescine biosynthesis via agmatine pathway; putrescine from agmatine: step 1/1. Functionally, catalyzes the formation of putrescine from agmatine. This Edwardsiella ictaluri (strain 93-146) protein is Agmatinase.